A 490-amino-acid chain; its full sequence is GTPase Der (490 aa).

EngA-type G domains lie at 3-166 (PVVA…MEDL) and 203-376 (IKLA…DSST). GTP-binding positions include 9 to 16 (GRPNVGKS), 56 to 60 (DTGGI), 118 to 121 (NKTD), 209 to 216 (GRPNVGKS), 256 to 260 (DTAGV), and 321 to 324 (NKWD). In terms of domain architecture, KH-like spans 377–461 (RRVGTSMLTR…PIRIQFKEGE (85 aa)).

Belongs to the TRAFAC class TrmE-Era-EngA-EngB-Septin-like GTPase superfamily. EngA (Der) GTPase family. Associates with the 50S ribosomal subunit.

GTPase that plays an essential role in the late steps of ribosome biogenesis. In Escherichia fergusonii (strain ATCC 35469 / DSM 13698 / CCUG 18766 / IAM 14443 / JCM 21226 / LMG 7866 / NBRC 102419 / NCTC 12128 / CDC 0568-73), this protein is GTPase Der.